The primary structure comprises 255 residues: Triosephosphate isomerase (255 aa).

15–17 serves as a coordination point for substrate; the sequence is NWK. His100 functions as the Electrophile in the catalytic mechanism. Glu172 serves as the catalytic Proton acceptor. Substrate is bound by residues Gly178, Ser218, and 239 to 240; that span reads GG.

This sequence belongs to the triosephosphate isomerase family. Homodimer.

It localises to the cytoplasm. The catalysed reaction is D-glyceraldehyde 3-phosphate = dihydroxyacetone phosphate. It participates in carbohydrate biosynthesis; gluconeogenesis. Its pathway is carbohydrate degradation; glycolysis; D-glyceraldehyde 3-phosphate from glycerone phosphate: step 1/1. Functionally, involved in the gluconeogenesis. Catalyzes stereospecifically the conversion of dihydroxyacetone phosphate (DHAP) to D-glyceraldehyde-3-phosphate (G3P). In Clostridium tetani (strain Massachusetts / E88), this protein is Triosephosphate isomerase.